The chain runs to 81 residues: ATP synthase subunit c (81 aa).

A run of 2 helical transmembrane segments spans residues 7–27 and 57–77; these read AASV…PGIG and LAFM…LLFA.

Belongs to the ATPase C chain family. As to quaternary structure, F-type ATPases have 2 components, F(1) - the catalytic core - and F(0) - the membrane proton channel. F(1) has five subunits: alpha(3), beta(3), gamma(1), delta(1), epsilon(1). F(0) has four main subunits: a(1), b(1), b'(1) and c(10-14). The alpha and beta chains form an alternating ring which encloses part of the gamma chain. F(1) is attached to F(0) by a central stalk formed by the gamma and epsilon chains, while a peripheral stalk is formed by the delta, b and b' chains.

The protein resides in the cellular thylakoid membrane. Its function is as follows. F(1)F(0) ATP synthase produces ATP from ADP in the presence of a proton or sodium gradient. F-type ATPases consist of two structural domains, F(1) containing the extramembraneous catalytic core and F(0) containing the membrane proton channel, linked together by a central stalk and a peripheral stalk. During catalysis, ATP synthesis in the catalytic domain of F(1) is coupled via a rotary mechanism of the central stalk subunits to proton translocation. Functionally, key component of the F(0) channel; it plays a direct role in translocation across the membrane. A homomeric c-ring of between 10-14 subunits forms the central stalk rotor element with the F(1) delta and epsilon subunits. The polypeptide is ATP synthase subunit c (Synechococcus elongatus (strain ATCC 33912 / PCC 7942 / FACHB-805) (Anacystis nidulans R2)).